The primary structure comprises 49 residues: uncharacterized protein (49 aa).

A helical membrane pass occupies residues tryptophan 16–phenylalanine 36.

It is found in the cell membrane. This is an uncharacterized protein from Bacillus subtilis (strain 168).